We begin with the raw amino-acid sequence, 230 residues long: Cytochrome c-552 (230 aa).

The signal sequence occupies residues 1 to 47; sequence MTTYLSQDRLRNKENDTMTYQHSKMYQSRTFLLFSALLLVAGQASAA. The heme c site is built by cysteine 63, cysteine 66, histidine 67, cysteine 166, cysteine 169, and histidine 170.

Post-translationally, binds 2 heme c groups covalently per subunit.

Its subcellular location is the periplasm. Its function is as follows. Diheme, high potential cytochrome c. The sequence is that of Cytochrome c-552 (cyc1) from Acidithiobacillus ferridurans.